Consider the following 434-residue polypeptide: Adenylosuccinate synthetase (434 aa).

GTP is bound by residues 22 to 28 and 50 to 52; these read GDEGKGK and GHT. Catalysis depends on D23, which acts as the Proton acceptor. Residues D23 and G50 each contribute to the Mg(2+) site. Residues 23–26, 48–51, T139, R153, Q234, T249, and R313 contribute to the IMP site; these read DEGK and NAGH. The Proton donor role is filled by H51. Substrate is bound at residue 309–315; the sequence is ATTGRKR. Residues R315, 341–343, and 423–425 contribute to the GTP site; these read KLD and SVG.

Belongs to the adenylosuccinate synthetase family. As to quaternary structure, homodimer. Mg(2+) serves as cofactor.

The protein resides in the cytoplasm. The catalysed reaction is IMP + L-aspartate + GTP = N(6)-(1,2-dicarboxyethyl)-AMP + GDP + phosphate + 2 H(+). It participates in purine metabolism; AMP biosynthesis via de novo pathway; AMP from IMP: step 1/2. In terms of biological role, plays an important role in the de novo pathway of purine nucleotide biosynthesis. Catalyzes the first committed step in the biosynthesis of AMP from IMP. This is Adenylosuccinate synthetase from Chlorobium phaeobacteroides (strain DSM 266 / SMG 266 / 2430).